A 357-amino-acid chain; its full sequence is Sulfate/thiosulfate import ATP-binding protein CysA (357 aa).

The region spanning 3–237 is the ABC transporter domain; it reads IQIQGVSKQY…PASPFVYDFL (235 aa). 35–42 is a binding site for ATP; the sequence is GPSGSGKT.

This sequence belongs to the ABC transporter superfamily. Sulfate/tungstate importer (TC 3.A.1.6) family. As to quaternary structure, the complex is composed of two ATP-binding proteins (CysA), two transmembrane proteins (CysT and CysW) and a solute-binding protein (CysP).

It is found in the cell membrane. It catalyses the reaction sulfate(out) + ATP + H2O = sulfate(in) + ADP + phosphate + H(+). It carries out the reaction thiosulfate(out) + ATP + H2O = thiosulfate(in) + ADP + phosphate + H(+). Its function is as follows. Part of the ABC transporter complex CysAWTP involved in sulfate/thiosulfate import. Responsible for energy coupling to the transport system. This chain is Sulfate/thiosulfate import ATP-binding protein CysA, found in Bacillus cereus (strain ATCC 10987 / NRS 248).